The following is a 177-amino-acid chain: ECF RNA polymerase sigma factor SigL (177 aa).

Positions 18–85 (LYDEHAAVLW…MIIDERRSAR (68 aa)) are sigma-70 factor domain-2. The Interaction with polymerase core subunit RpoC signature appears at 42–45 (DVVQ). Residues 119–167 (ALAQLSAEHRAVIQRSYYRGWSTAQIATDLGIAEGTVKSRLHYAVRALR) form a sigma-70 factor domain-4 region. A DNA-binding region (H-T-H motif) is located at residues 141-160 (TAQIATDLGIAEGTVKSRLH).

It belongs to the sigma-70 factor family. ECF subfamily. Interacts transiently with the RNA polymerase catalytic core formed by RpoA, RpoB, RpoC and RpoZ (2 alpha, 1 beta, 1 beta' and 1 omega subunit) to form the RNA polymerase holoenzyme that can initiate transcription. Interacts (via sigma-70 factor domain 4) with anti-sigma-L factor RslA.

Functionally, sigma factors are initiation factors that promote the attachment of RNA polymerase to specific initiation sites and are then released. Extracytoplasmic function (ECF) sigma factors are held in an inactive form by an anti-sigma factor until released by regulated intramembrane proteolysis. The chain is ECF RNA polymerase sigma factor SigL (sigL) from Mycobacterium tuberculosis (strain ATCC 35801 / TMC 107 / Erdman).